A 598-amino-acid chain; its full sequence is UvrABC system protein C (598 aa).

Positions 13 to 91 (TLPGVYRMVD…IKGLKPRFNI (79 aa)) constitute a GIY-YIG domain. Residues 200–235 (TALTEEITAQMNAAAENLDFETAAYLRDRLRMLATV) form the UVR domain.

This sequence belongs to the UvrC family. Interacts with UvrB in an incision complex.

It is found in the cytoplasm. In terms of biological role, the UvrABC repair system catalyzes the recognition and processing of DNA lesions. UvrC both incises the 5' and 3' sides of the lesion. The N-terminal half is responsible for the 3' incision and the C-terminal half is responsible for the 5' incision. The polypeptide is UvrABC system protein C (Thiobacillus denitrificans (strain ATCC 25259 / T1)).